Consider the following 138-residue polypeptide: Outer membrane protein assembly factor BamE (138 aa).

The first 42 residues, 1–42, serve as a signal peptide directing secretion; it reads MSHLTMIKTLNLRPFHSASALRKIVITSILGVAVTMSGCSLL.

It belongs to the BamE family. As to quaternary structure, part of the Bam complex.

Its subcellular location is the cell outer membrane. Functionally, part of the outer membrane protein assembly complex, which is involved in assembly and insertion of beta-barrel proteins into the outer membrane. The protein is Outer membrane protein assembly factor BamE of Psychrobacter arcticus (strain DSM 17307 / VKM B-2377 / 273-4).